The sequence spans 159 residues: Riboflavin kinase (159 aa).

Residue Gly38–Arg43 coordinates CDP. Thr67 and Asn69 together coordinate Mg(2+). FMN contacts are provided by Thr126 and Glu134. His139–Arg142 lines the CDP pocket.

The protein belongs to the archaeal riboflavin kinase family. The cofactor is Mg(2+).

It carries out the reaction riboflavin + CTP = CDP + FMN + H(+). It functions in the pathway cofactor biosynthesis; FMN biosynthesis; FMN from riboflavin (CTP route): step 1/1. Its function is as follows. Catalyzes the CTP-dependent phosphorylation of riboflavin (vitamin B2) to form flavin mononucleotide (FMN). In Sulfolobus acidocaldarius (strain ATCC 33909 / DSM 639 / JCM 8929 / NBRC 15157 / NCIMB 11770), this protein is Riboflavin kinase.